Here is a 260-residue protein sequence, read N- to C-terminus: LIM and SH3 domain protein 1 (260 aa).

N-acetylmethionine is present on Met1. Positions 5-56 (CARCCKIVYPTEKVNCLDKFWHKACFHCETCKMTLNMKNYKGYEKKPYCNAH) constitute an LIM zinc-binding domain. Position 42 is an N6-acetyllysine (Lys42). 2 Nebulin repeats span residues 61-95 (SFTMVADTPENLRLKQQSELQSQVRYKEEFEKNKG) and 97-131 (GFSVVADTPELQRIKKTQDQISNIKYHEEFEKSRM). Position 68 is a phosphothreonine (Thr68). Lys75 is modified (N6-methyllysine). Residue Ser99 is modified to Phosphoserine. Residue Thr104 is modified to Phosphothreonine. Lys112 carries the N6-succinyllysine modification. Phosphoserine occurs at positions 118 and 134. The interval 123 to 204 (HEEFEKSRMG…QRSAPGGGGK (82 aa)) is disordered. Basic and acidic residues predominate over residues 140 to 155 (ECERRDPQESSYRRPQ). A compositionally biased stretch (low complexity) spans 171-180 (QQPQQQPAAQ). One can recognise an SH3 domain in the interval 201-260 (GGGKRYRAVYDYSAADEDEVSFQDGDTIVNVQQIDDGWMYGTVERTGDTGMLPANYVEAI).

In terms of assembly, interacts with F-actin. Interacts with ANKRD54. Interacts with KBTBD10. Post-translationally, phosphorylated.

The protein localises to the cytoplasm. It localises to the cell cortex. It is found in the cytoskeleton. Plays an important role in the regulation of dynamic actin-based, cytoskeletal activities. Agonist-dependent changes in LASP1 phosphorylation may also serve to regulate actin-associated ion transport activities, not only in the parietal cell but also in certain other F-actin-rich secretory epithelial cell types. This is LIM and SH3 domain protein 1 (LASP1) from Bos taurus (Bovine).